Consider the following 414-residue polypeptide: 11-beta-hydroxysteroid dehydrogenase type 2 (414 aa).

4 helical membrane passes run 3–23 (DFAV…GGAV), 26–46 (FLAF…ATLL), 52–72 (ALCM…WLYF), and 341–361 (YYAG…PLSI). The interval 382–414 (KQQGLSPNDNNNSIKENMNDSSSNNSNFTKCID) is disordered. Positions 384–397 (QGLSPNDNNNSIKE) are enriched in polar residues.

Belongs to the short-chain dehydrogenases/reductases (SDR) family. As to expression, broadly expressed in peripheral (brain, gill, eye, heart, liver, head kidney, posterior kidney, and gut).

The protein localises to the membrane. The catalysed reaction is an 11beta-hydroxysteroid + NAD(+) = an 11-oxosteroid + NADH + H(+). It catalyses the reaction cortisol + NAD(+) = cortisone + NADH + H(+). It carries out the reaction corticosterone + NAD(+) = 11-dehydrocorticosterone + NADH + H(+). The enzyme catalyses 11beta,17beta-dihydroxyandrost-4-ene-3-one + NAD(+) = 17beta-hydroxyandrost-4-ene-3,11-dione + NADH + H(+). The catalysed reaction is 11beta-hydroxyandrost-4-ene-3,17-dione + NAD(+) = androst-4-ene-3,11,17-trione + NADH + H(+). It functions in the pathway steroid metabolism. Its function is as follows. Catalyzes the conversion of biologically active 11beta-hydroxyglucocorticoids (11beta-hydroxysteroid) such as cortisol, to inactive 11-ketoglucocorticoids (11-oxosteroid) such as cortisone, in the presence of NAD(+). Cortisol is the primary glucocorticoid in teleosts and is released to increase glucose bioavailability in order to meet the increased energy demands in response to stress. Functions as a dehydrogenase (oxidase), thereby decreasing the concentration of active glucocorticoids, regulating the hypothalamus-pituitary-interrenal (HPI) axis function in adult fish. Decreasing the excess glucocorticoids may be of relevance to brain function and neural proliferation. Plays a key role by catalyzing the oxidation of 11beta-hydroxytestosterone (11beta,17beta-dihydroxyandrost-4-ene-3-one) to 11-ketotestosterone (17beta-hydroxyandrost-4-ene-3,11-dione), the major fish androgen, that activates androgen receptor transcriptional activity. Catalyzes the conversion of 11beta-hydroxyandrostenedione (11beta-hydroxyandrost-4-ene-3,17-dione) to 11-ketoandrostenedione (androst-4-ene-3,11,17-trione), which can be further metabolized to 11-ketotestosterone. Exerts a dual role in fish by inactivating glucocorticoids and activating androgens. This Danio rerio (Zebrafish) protein is 11-beta-hydroxysteroid dehydrogenase type 2 (hsd11b2).